We begin with the raw amino-acid sequence, 281 residues long: Insecticidal crystal toxin protein (281 aa).

Antigenic epitope regions lie at residues 54 to 78, 91 to 104, 108 to 116, 131 to 148, 160 to 172, 189 to 196, 208 to 216, 221 to 236, and 247 to 256; these read NYSH…VYTF, IYTH…AVKA, GTASKVVQG, FKIT…FIRI, AVIN…VAEL, KYKDFQYL, QNISLVFNR, TNTT…LPIT, and KLETVQQIIN.

The protein belongs to the delta endotoxin family.

Promotes colloidosmotic lysis by binding to the midgut epithelial cells of insects. Active against Mamestra brassicae. The chain is Insecticidal crystal toxin protein from Bacillus thuringiensis subsp. kurstaki.